Reading from the N-terminus, the 375-residue chain is AT-rich binding protein (375 aa).

The C2H2-type 1 zinc-finger motif lies at 29–52 (IVCHTCQEELQTQDQFWKHIQDEH). The segment covering 110–119 (DDQREMDIHE) has biased composition (basic and acidic residues). Residues 110–142 (DDQREMDIHEAQQQQHQQQQQHQQQQQLQQQQQ) are disordered. A compositionally biased stretch (low complexity) spans 121 to 142 (QQQQHQQQQQHQQQQQLQQQQQ). 2 consecutive C2H2-type zinc fingers follow at residues 308–332 (YICD…RVVH) and 338–361 (FNCE…KKKH).

The protein localises to the nucleus. In terms of biological role, may be a transcription factor for genes having (A+T) stretches in their promoter and/or enhancer regions. Binds to AT rich DNA. The sequence is that of AT-rich binding protein from Drosophila pseudoobscura pseudoobscura (Fruit fly).